The following is a 126-amino-acid chain: Large ribosomal subunit protein eL32 (126 aa).

This sequence belongs to the eukaryotic ribosomal protein eL32 family.

The chain is Large ribosomal subunit protein eL32 from Thermococcus onnurineus (strain NA1).